Here is a 211-residue protein sequence, read N- to C-terminus: Soluble inorganic pyrophosphatase PPA1 (211 aa).

Positions 61 and 75 each coordinate substrate. Catalysis depends on Tyr-83, which acts as the Proton donor. Residue Tyr-87 participates in substrate binding. Residues Asp-97, Asp-102, and Asp-134 each contribute to the Mg(2+) site. Tyr-171 is a binding site for substrate.

Belongs to the PPase family. Mg(2+) serves as cofactor.

It localises to the cytoplasm. The catalysed reaction is diphosphate + H2O = 2 phosphate + H(+). Strongly inhibited by Ca(2+). Catalyzes the irreversible hydrolysis of pyrophosphate (PPi) to phosphate. This Solanum tuberosum (Potato) protein is Soluble inorganic pyrophosphatase PPA1.